The following is a 442-amino-acid chain: Chromosomal replication initiator protein DnaA (442 aa).

Residues 1–75 (MDAWPRCLER…GNGEVALAVG (75 aa)) are domain I, interacts with DnaA modulators. The interval 75–104 (GSRPRAPEPLPAPQAVASAPAAAPIVPFAG) is domain II. The interval 105-322 (NLDSHYTFAN…GALNTLVARA (218 aa)) is domain III, AAA+ region. Positions 150, 152, 153, and 154 each coordinate ATP. Residues 323–442 (NFTGRSITVE…WEKLIRKLSE (120 aa)) form a domain IV, binds dsDNA region.

It belongs to the DnaA family. Oligomerizes as a right-handed, spiral filament on DNA at oriC.

Its subcellular location is the cytoplasm. In terms of biological role, plays an essential role in the initiation and regulation of chromosomal replication. ATP-DnaA binds to the origin of replication (oriC) to initiate formation of the DNA replication initiation complex once per cell cycle. Binds the DnaA box (a 9 base pair repeat at the origin) and separates the double-stranded (ds)DNA. Forms a right-handed helical filament on oriC DNA; dsDNA binds to the exterior of the filament while single-stranded (ss)DNA is stabiized in the filament's interior. The ATP-DnaA-oriC complex binds and stabilizes one strand of the AT-rich DNA unwinding element (DUE), permitting loading of DNA polymerase. After initiation quickly degrades to an ADP-DnaA complex that is not apt for DNA replication. Binds acidic phospholipids. This Xanthomonas campestris pv. campestris (strain B100) protein is Chromosomal replication initiator protein DnaA.